We begin with the raw amino-acid sequence, 901 residues long: Protein translocase subunit SecA 1 (901 aa).

ATP-binding positions include Gln89, 107-111, and Asp502; that span reads GEGKT. Positions 856–875 are disordered; the sequence is AEAKASGDARPGFVEDDPST. Zn(2+)-binding residues include Cys885, Cys887, Cys896, and His897.

The protein belongs to the SecA family. As to quaternary structure, monomer and homodimer. Part of the essential Sec protein translocation apparatus which comprises SecA, SecYEG and auxiliary proteins SecDF-YajC and YidC. Zn(2+) is required as a cofactor.

It is found in the cell inner membrane. The protein localises to the cytoplasm. It carries out the reaction ATP + H2O + cellular proteinSide 1 = ADP + phosphate + cellular proteinSide 2.. In terms of biological role, part of the Sec protein translocase complex. Interacts with the SecYEG preprotein conducting channel. Has a central role in coupling the hydrolysis of ATP to the transfer of proteins into and across the cell membrane, serving both as a receptor for the preprotein-SecB complex and as an ATP-driven molecular motor driving the stepwise translocation of polypeptide chains across the membrane. The sequence is that of Protein translocase subunit SecA 1 from Ruegeria pomeroyi (strain ATCC 700808 / DSM 15171 / DSS-3) (Silicibacter pomeroyi).